The chain runs to 820 residues: Inhibitor of nuclear factor kappa-B kinase epsilon subunit homolog 1 (820 aa).

The Protein kinase domain maps to 21–299; the sequence is LFNDESIGKG…TDIFEFQPVT (279 aa). ATP-binding positions include 27–35 and lysine 49; that span reads IGKGAYSEV. Catalysis depends on aspartate 149, which acts as the Proton acceptor. The interval 758–798 is disordered; it reads SPNKEQFPKPEQDSILESSIDEGSTSFESTPPSSPPDVGSN.

It belongs to the protein kinase superfamily. Ser/Thr protein kinase family. In terms of assembly, interacts with allo-1 (via N-terminus); the interaction is direct. As to expression, expressed in oocytes.

The protein localises to the cytoplasm. The catalysed reaction is L-seryl-[protein] + ATP = O-phospho-L-seryl-[protein] + ADP + H(+). It catalyses the reaction L-threonyl-[protein] + ATP = O-phospho-L-threonyl-[protein] + ADP + H(+). Functionally, serine/threonine-protein kinase, which plays a role in regulating allophagy, an autophagic process in which paternal organelles, including mitochondria and membranous organelles, are degraded in embryos. Phosphorylates the allophagy receptor allo-1, which is required for allophagy. This is Inhibitor of nuclear factor kappa-B kinase epsilon subunit homolog 1 from Caenorhabditis elegans.